Consider the following 1456-residue polypeptide: RNA replication protein (1456 aa).

An Alphavirus-like MT domain is found at 59 to 224 (NPYSIELHTH…HHEFSHLQWL (166 aa)). Residues 537 to 573 (MRAEGEAESNEMSGGMGAIPSNAELPSTSGARQELTL) are disordered. Residues 560 to 573 (ELPSTSGARQELTL) are compositionally biased toward polar residues. The region spanning 695–862 (DVKNKRIGAI…YFSKYCRYYL (168 aa)) is the (+)RNA virus helicase ATP-binding domain. An ATP-binding site is contributed by 735 to 742 (GAGGSGKS). A (+)RNA virus helicase C-terminal domain is found at 863–997 (NATHRNKKDL…VVREQALKEY (135 aa)). Residues 1236–1343 (RPSLANDYTA…DCVPEVKHSF (108 aa)) enclose the RdRp catalytic domain.

The protein belongs to the potexvirus/carlavirus RNA replication protein family.

It catalyses the reaction RNA(n) + a ribonucleoside 5'-triphosphate = RNA(n+1) + diphosphate. The enzyme catalyses ATP + H2O = ADP + phosphate + H(+). Its function is as follows. RNA replication. The central part of this protein possibly functions as an ATP-binding helicase. The sequence is that of RNA replication protein from Potato virus X (PVX).